We begin with the raw amino-acid sequence, 428 residues long: Adenylosuccinate synthetase (428 aa).

GTP contacts are provided by residues 12–18 and 40–42; these read GDEGKGK and GHT. The active-site Proton acceptor is D13. Residues D13 and G40 each contribute to the Mg(2+) site. IMP is bound by residues 13-16, 38-41, T128, R142, Q223, T238, and R302; these read DEGK and NAGH. H41 serves as the catalytic Proton donor. A substrate-binding site is contributed by 298–304; it reads VTTKRPR. GTP contacts are provided by residues R304, 330–332, and 412–414; these read KLD and GVG.

It belongs to the adenylosuccinate synthetase family. In terms of assembly, homodimer. Mg(2+) is required as a cofactor.

Its subcellular location is the cytoplasm. The enzyme catalyses IMP + L-aspartate + GTP = N(6)-(1,2-dicarboxyethyl)-AMP + GDP + phosphate + 2 H(+). It participates in purine metabolism; AMP biosynthesis via de novo pathway; AMP from IMP: step 1/2. Its function is as follows. Plays an important role in the de novo pathway of purine nucleotide biosynthesis. Catalyzes the first committed step in the biosynthesis of AMP from IMP. This chain is Adenylosuccinate synthetase, found in Cutibacterium acnes (strain DSM 16379 / KPA171202) (Propionibacterium acnes).